The sequence spans 497 residues: Inactive metallocarboxypeptidase ecm14 (497 aa).

Positions 1 to 28 (MAYNKSLKSLVFILLASQIVFVLFLCYG) are cleaved as a signal peptide. The propeptide occupies 29–148 (KSSRELGVKW…TLFESIVPDT (120 aa)). Residues 182-492 (SYQNLESINS…AMILYYGEFI (311 aa)) enclose the Peptidase M14 domain. Zn(2+) contacts are provided by His248 and Glu251. Residues 248-251 (HARE) and 323-324 (DA) contribute to the substrate site. Cys317 and Cys337 are joined by a disulfide. His377 contacts Zn(2+). 378–379 (SY) provides a ligand contact to substrate.

It belongs to the peptidase M14 family. The cofactor is Zn(2+).

The protein localises to the endoplasmic reticulum. It localises to the secreted. Its function is as follows. Inactive carboxypeptidase that may play a role in cell wall organization and biogenesis. The sequence is that of Inactive metallocarboxypeptidase ecm14 from Schizosaccharomyces pombe (strain 972 / ATCC 24843) (Fission yeast).